The following is a 162-amino-acid chain: Zinc finger protein 593 homolog (162 aa).

The C2H2-type zinc finger occupies 59 to 83 (FYCVHCAKYFIDDTAMQAHFRTKVH). A disordered region spans residues 110 to 162 (VKPKKRAMETQPSKEDVVAGKRIRVEVVPEDTDATDSPSTSKTKRKKVEKMET). Positions 115 to 136 (RAMETQPSKEDVVAGKRIRVEV) are enriched in basic and acidic residues. Residues 151-162 (KTKRKKVEKMET) are compositionally biased toward basic residues.

This sequence belongs to the ZNF593/BUD20 C2H2-type zinc-finger protein family. As to quaternary structure, associates with pre-60S ribosomal particles; released from the pre-60S particle very early in the cytoplasm.

It is found in the nucleus. Its subcellular location is the cytoplasm. Its function is as follows. Involved in pre-60S ribosomal particles maturation by promoting the nuclear export of the 60S ribosome. The sequence is that of Zinc finger protein 593 homolog from Drosophila melanogaster (Fruit fly).